We begin with the raw amino-acid sequence, 190 residues long: UPF0340 protein BCE33L5016 (190 aa).

Belongs to the UPF0340 family.

This is UPF0340 protein BCE33L5016 from Bacillus cereus (strain ZK / E33L).